Reading from the N-terminus, the 459-residue chain is N-chimaerin (459 aa).

A2 is modified (N-acetylalanine). The region spanning 49–135 (EFHGMISREA…IETKAAEYIA (87 aa)) is the SH2 domain. T192 carries the phosphothreonine modification. The Phorbol-ester/DAG-type zinc-finger motif lies at 205-255 (IHNFKVHTFRGPHWCEYCANFMWGLIAQGVKCADCGLNVHKQCSKMVPNDC). The region spanning 268 to 459 (CDLTTLVKAH…LLIKNEDILF (192 aa)) is the Rho-GAP domain. The residue at position 340 (T340) is a Phosphothreonine.

In terms of assembly, interacts with EPHA4; effector of EPHA4 in axon guidance linking EPHA4 activation to RAC1 regulation. Post-translationally, phosphorylated. Phosphorylation is EPHA4 kinase activity-dependent. In terms of tissue distribution, in neurons in brain regions that are involved in learning and memory processes.

In terms of biological role, GTPase-activating protein for p21-rac and a phorbol ester receptor. Involved in the assembly of neuronal locomotor circuits as a direct effector of EPHA4 in axon guidance. The chain is N-chimaerin (CHN1) from Homo sapiens (Human).